Here is a 343-residue protein sequence, read N- to C-terminus: Heat-inducible transcription repressor HrcA (343 aa).

This sequence belongs to the HrcA family.

In terms of biological role, negative regulator of class I heat shock genes (grpE-dnaK-dnaJ and groELS operons). Prevents heat-shock induction of these operons. The polypeptide is Heat-inducible transcription repressor HrcA (Bacillus pumilus (strain SAFR-032)).